The primary structure comprises 542 residues: Chaperonin GroEL (542 aa).

ATP contacts are provided by residues 29–32, Lys50, 86–90, Gly415, and Asp495; these read TLGP and DGTTT.

It belongs to the chaperonin (HSP60) family. In terms of assembly, forms a cylinder of 14 subunits composed of two heptameric rings stacked back-to-back. Interacts with the co-chaperonin GroES.

The protein resides in the cytoplasm. The enzyme catalyses ATP + H2O + a folded polypeptide = ADP + phosphate + an unfolded polypeptide.. Functionally, together with its co-chaperonin GroES, plays an essential role in assisting protein folding. The GroEL-GroES system forms a nano-cage that allows encapsulation of the non-native substrate proteins and provides a physical environment optimized to promote and accelerate protein folding. The polypeptide is Chaperonin GroEL (Azobacteroides pseudotrichonymphae genomovar. CFP2).